The chain runs to 117 residues: Large ribosomal subunit protein bL20 (117 aa).

Belongs to the bacterial ribosomal protein bL20 family.

Binds directly to 23S ribosomal RNA and is necessary for the in vitro assembly process of the 50S ribosomal subunit. It is not involved in the protein synthesizing functions of that subunit. The polypeptide is Large ribosomal subunit protein bL20 (rplT) (Rickettsia prowazekii (strain Madrid E)).